Here is a 508-residue protein sequence, read N- to C-terminus: Flavonoid 3',5'-hydroxylase 2 (508 aa).

C443 lines the heme pocket.

This sequence belongs to the cytochrome P450 family. The cofactor is heme. As to expression, flowers.

It is found in the microsome. The protein resides in the endoplasmic reticulum. The catalysed reaction is a 3',5'-unsubstituted flavanone + 2 reduced [NADPH--hemoprotein reductase] + 2 O2 = a 3',5'-dihydroxyflavanone + 2 oxidized [NADPH--hemoprotein reductase] + 2 H2O + 2 H(+). The protein operates within pigment biosynthesis; anthocyanin biosynthesis. Catalyzes the 3'5'-hydroxylation of naringenin and eriodictyol to form 5,7,3,'4',5'-pentahydroxyflavanone and 3',5'-hydroxylation of dihydrokaempferol and dihydroquercetin to form dihydromyricetin. This chain is Flavonoid 3',5'-hydroxylase 2 (CYP75A3), found in Petunia hybrida (Petunia).